Consider the following 715-residue polypeptide: Nucleolar complex protein 2 homolog (715 aa).

Disordered stretches follow at residues 17–71 (SKRI…HKLD), 85–132 (FLQQ…DKTK), and 638–715 (ERSA…SDED). The segment covering 89–128 (EDADLLNMEDDGDDDEDDDEDDEDEEEEESDDDEDDEEDD) has biased composition (acidic residues). Over residues 638-660 (ERSAVENSKKDDKKKKKEEEAAA) the composition is skewed to basic and acidic residues.

This sequence belongs to the NOC2 family.

Its subcellular location is the nucleus. Its function is as follows. Required for normal somatic gonad development and for regulation of germline development and proliferation. This Caenorhabditis elegans protein is Nucleolar complex protein 2 homolog (pro-2).